A 303-amino-acid polypeptide reads, in one-letter code: ATP synthase gamma chain (303 aa).

Belongs to the ATPase gamma chain family. As to quaternary structure, F-type ATPases have 2 components, CF(1) - the catalytic core - and CF(0) - the membrane proton channel. CF(1) has five subunits: alpha(3), beta(3), gamma(1), delta(1), epsilon(1). CF(0) has three main subunits: a, b and c.

It is found in the cell membrane. Produces ATP from ADP in the presence of a proton gradient across the membrane. The gamma chain is believed to be important in regulating ATPase activity and the flow of protons through the CF(0) complex. This chain is ATP synthase gamma chain, found in Oenococcus oeni (strain ATCC BAA-331 / PSU-1).